The chain runs to 210 residues: V-type ATP synthase subunit D (210 aa).

The protein belongs to the V-ATPase D subunit family.

Produces ATP from ADP in the presence of a proton gradient across the membrane. In Coprothermobacter proteolyticus (strain ATCC 35245 / DSM 5265 / OCM 4 / BT), this protein is V-type ATP synthase subunit D.